The following is a 369-amino-acid chain: Ribonuclease D (369 aa).

A 3'-5' exonuclease domain is found at 4–168 (EIITTTAQLH…CLEKLQQQLE (165 aa)). Residues 207-286 (DRQGLAIIKA…TQVISQDEST (80 aa)) enclose the HRDC domain.

Belongs to the RNase D family. A divalent metal cation serves as cofactor.

The protein resides in the cytoplasm. It catalyses the reaction Exonucleolytic cleavage that removes extra residues from the 3'-terminus of tRNA to produce 5'-mononucleotides.. Functionally, exonuclease involved in the 3' processing of various precursor tRNAs. Initiates hydrolysis at the 3'-terminus of an RNA molecule and releases 5'-mononucleotides. This Psychromonas ingrahamii (strain DSM 17664 / CCUG 51855 / 37) protein is Ribonuclease D.